The chain runs to 406 residues: Exodeoxyribonuclease 7 large subunit (406 aa).

Belongs to the XseA family. Heterooligomer composed of large and small subunits.

The protein resides in the cytoplasm. The catalysed reaction is Exonucleolytic cleavage in either 5'- to 3'- or 3'- to 5'-direction to yield nucleoside 5'-phosphates.. Bidirectionally degrades single-stranded DNA into large acid-insoluble oligonucleotides, which are then degraded further into small acid-soluble oligonucleotides. The polypeptide is Exodeoxyribonuclease 7 large subunit (Thermobifida fusca (strain YX)).